We begin with the raw amino-acid sequence, 265 residues long: Polyphosphate glucokinase (265 aa).

Residues 1–18 are compositionally biased toward polar residues; that stretch reads MTSTGPETSETPGATTQR. The disordered stretch occupies residues 1-22; the sequence is MTSTGPETSETPGATTQRHGFG. ATP is bound at residue 24-29; it reads DVGGSG.

This sequence belongs to the ROK (NagC/XylR) family. Homodimer.

It catalyses the reaction [phosphate](n) + D-glucose = [phosphate](n-1) + D-glucose 6-phosphate + H(+). The catalysed reaction is D-glucose + ATP = D-glucose 6-phosphate + ADP + H(+). Functionally, catalyzes the phosphorylation of glucose using polyphosphate or ATP as the phosphoryl donor. Polyphosphate, rather than ATP, seems to be the major phosphate donor for the enzyme in M.tuberculosis. GTP, UTP and CTP can replace ATP as phosphoryl donor. The protein is Polyphosphate glucokinase (ppgK) of Mycobacterium tuberculosis (strain ATCC 25177 / H37Ra).